Consider the following 502-residue polypeptide: MAISLLCLFLITLVSLIFVVKKIKHSKWDLPPSPPTFPVIGNLHQVGELPHRSFQRLAERTGHVMLLHFGFVPVTVISSREAAEEVLRTHDLKCCTRPKLVGSRLISRGFKDISFTPYGEEWRERRKFLVRELFCFKKVQYFGYIVEEECNLLVKKLTESAVGRPPVDLSKSLFWLAASILFRIAFGQSFHDNKFIDEDKIDELIFETETAQASFTCSDFFPIAGLGWLADWISGKHRWLNNVFFKLDALFQRVIDDHSDPGRWKDHKDIVDVMLDVMHKQGKDDSLRLTIDHIKGFLTNIIIAGIDTGALTMIWAMTELARNPELMKNVQGEIRDSFGNNKERITKEDLNKVPFLNMVIKETFRLHPVAPLLLPRETMTHIKVQGYDIPPKRRILVNTWAIGRDPTLWINPEEFNPERFINNPVDYRGQHFELLPFGSGRRICPGMGLGITIVELGLLNLLYFFDWRAPDGMTHKDIDTEEAGILTVVKKVPLKLVPVRVQ.

A helical membrane pass occupies residues methionine 1 to lysine 21. Cysteine 444 is a heme binding site.

This sequence belongs to the cytochrome P450 family. Heme is required as a cofactor.

The protein resides in the membrane. The protein is Cytochrome P450 71B16 (CYP71B16) of Arabidopsis thaliana (Mouse-ear cress).